A 402-amino-acid polypeptide reads, in one-letter code: Argininosuccinate synthase (402 aa).

Residues 13–21 (AYSGGLDTS) and A40 contribute to the ATP site. L-citrulline contacts are provided by Y91 and S96. An ATP-binding site is contributed by G121. Positions 123, 127, and 128 each coordinate L-aspartate. An L-citrulline-binding site is contributed by N127. R131, S180, S189, E265, and Y277 together coordinate L-citrulline.

The protein belongs to the argininosuccinate synthase family. Type 1 subfamily. Homotetramer.

Its subcellular location is the cytoplasm. It catalyses the reaction L-citrulline + L-aspartate + ATP = 2-(N(omega)-L-arginino)succinate + AMP + diphosphate + H(+). It participates in amino-acid biosynthesis; L-arginine biosynthesis; L-arginine from L-ornithine and carbamoyl phosphate: step 2/3. The chain is Argininosuccinate synthase from Leptospira biflexa serovar Patoc (strain Patoc 1 / Ames).